Reading from the N-terminus, the 389-residue chain is Phosphopentomutase (389 aa).

Mn(2+)-binding residues include Asp-12, Asp-284, His-289, Asp-325, His-326, and His-337.

Belongs to the phosphopentomutase family. Mn(2+) is required as a cofactor.

It localises to the cytoplasm. The enzyme catalyses 2-deoxy-alpha-D-ribose 1-phosphate = 2-deoxy-D-ribose 5-phosphate. The catalysed reaction is alpha-D-ribose 1-phosphate = D-ribose 5-phosphate. Its pathway is carbohydrate degradation; 2-deoxy-D-ribose 1-phosphate degradation; D-glyceraldehyde 3-phosphate and acetaldehyde from 2-deoxy-alpha-D-ribose 1-phosphate: step 1/2. Isomerase that catalyzes the conversion of deoxy-ribose 1-phosphate (dRib-1-P) and ribose 1-phosphate (Rib-1-P) to deoxy-ribose 5-phosphate (dRib-5-P) and ribose 5-phosphate (Rib-5-P), respectively. The polypeptide is Phosphopentomutase (Anaeromyxobacter sp. (strain Fw109-5)).